A 121-amino-acid polypeptide reads, in one-letter code: Basic phospholipase A2 caudoxin (121 aa).

Disulfide bonds link Cys25–Cys114, Cys27–Cys43, Cys42–Cys94, Cys48–Cys121, Cys49–Cys87, Cys56–Cys80, and Cys74–Cys85. Ca(2+)-binding residues include Tyr26, Gly28, and Gly30. The active site involves His46. Asp47 serves as a coordination point for Ca(2+). Residue Asp88 is part of the active site.

It belongs to the phospholipase A2 family. Group II subfamily. D49 sub-subfamily. In terms of assembly, monomer. It depends on Ca(2+) as a cofactor. In terms of tissue distribution, expressed by the venom gland.

The protein localises to the secreted. The enzyme catalyses a 1,2-diacyl-sn-glycero-3-phosphocholine + H2O = a 1-acyl-sn-glycero-3-phosphocholine + a fatty acid + H(+). Snake venom phospholipase A2 (PLA2) that shows anticoagulant activity and presynaptic neurotoxicity. Acts as an anticoagulant toxin by inhibiting prothrombinase complex formation. Shows about 50% of the prothrombinase complex inhibition compared to CM-IV of N.nigricollis venom. Acts as a neurotoxin by inhibiting neuromuscular transmission by blocking acetylcholine release from the nerve termini. PLA2 catalyzes the calcium-dependent hydrolysis of the 2-acyl groups in 3-sn-phosphoglycerides. This chain is Basic phospholipase A2 caudoxin, found in Bitis caudalis (Horned adder).